A 258-amino-acid chain; its full sequence is Large ribosomal subunit protein uL5c (258 aa).

The transit peptide at 1 to 38 directs the protein to the chloroplast; it reads MASTSLLQSTSSSFAGVRFHCRTSAAPRVGLSSFTVKA.

Component of the chloroplast large ribosomal subunit (LSU). Mature 70S chloroplast ribosomes of higher plants consist of a small (30S) and a large (50S) subunit. The 30S small subunit contains 1 molecule of ribosomal RNA (16S rRNA) and 24 different proteins. The 50S large subunit contains 3 rRNA molecules (23S, 5S and 4.5S rRNA) and 33 different proteins.

The protein localises to the plastid. It localises to the chloroplast. Its function is as follows. Component of the chloroplast ribosome (chloro-ribosome), a dedicated translation machinery responsible for the synthesis of chloroplast genome-encoded proteins, including proteins of the transcription and translation machinery and components of the photosynthetic apparatus. The polypeptide is Large ribosomal subunit protein uL5c (RPL5) (Spinacia oleracea (Spinach)).